We begin with the raw amino-acid sequence, 2116 residues long: MSGFRLGDHVWLEPPSTHKTGVAIGGIIKEAKPGKVLVEDDEGKEHWIRAEDFGVLSPMHPNSVQGVDDMIRLGDLNEAGMVHNLLIRYQQHKIYTYTGSILVAVNPFQVLPLYTLEQVQLYYSRHMGELPPHVFAIANNCYFSMKRNKRDQCCIISGESGAGKTETTKLILQFLATISGQHSWIEQQVLEANPILEAFGNAKTIRNDNSSRFGKYIDIYFNPSGVIEGARIEQFLLEKSRVCRQAPEERNYHIFYCMLMGVSAEDKQLLSLGTPSEYHYLTMGNCTSCEGLNDAKDYAHIRSAMKILQFSDSESWDVIKLLAAILHLGNVGFMASVFENLDASDVMETPAFPTVMKLLEVQHQELRDCLIKHTILIRGEFVTRSLNIAQAADRRDAFVKGIYGHLFLWIVKKINAAIFTPPAQDPKNVRRAIGLLDIFGFENFENNSFEQLCINFANEHLQQFFVQHVFTMEQEEYRSENISWDYIHYTDNRPTLDLLALKPMSIISLLDEESRFPQGTDLTMLQKLNSVHANNKAFLQPKNIHDARFGIAHFAGEVYYQAEGFLEKNRDVLSTDILTLVYSSKNKFLREIFNLELAETKLGHGTIRQAKAGNHLFKSADSNKRPSTLGSQFKQSLDQLMKILTNCQPYFIRCIKPNEYKKPLLFDRELCLRQLRYSGMMETVHIRKSGFPIRYTFEEFSQRFGVLLPNAMRMQLQGKLRQMTLGITDVWLRTDKDWKAGKTKIFLRDHQDTLLEVQRSQVLDRAALSIQKVLRGYRYRKEFLRQRRAAVTLQAWWRGYCNRRNFKLILVGFERLQAIARSQPLARQYQAMRQRTVQLQALCRGYLVRQQVQAKRRAVVVIQAHARGMAARRNFQQRKANAPLVIPAEGQKSQGALPAKKRRSIYDTVTDTEMVEKVFGFLPAMIGGQEGQASPHFEDLESKTQKLLEVDLDTVPMAEEPEEDVDGLAEYTFPKFAVTYFQKSASHTHIRRPLRYPLLYHEDDTDCLAALVIWNVILRFMGDLPEPVLYARSSQQGSSVMRQIHDTLGREHGAQVPQHSRSAQVASQLNIGEEALEPDGLGADRPMSNLEKVHFIVGYAILRPSLRDEIYCQICKQLSENFKTSSLARGWILLSLCLGCFPPSERFMKYLLNFIGQGPATYGPFCAERLRRTYANGVRAEPPTWLELQAVKSKKHIPIQVILATGESLTVPVDSASTSREMCMHIAHKQGLSDHLGFSLQVAVYDKFWSLGSGRDHMMDAIARCEQMAQERGESQRQSPWRIYFRKEFFTPWHDSREDPVSTELIYRQVLRGVWSGEYSFEKEEELVELLARHCYVQLGASAESKAVQELLPSCIPHKLYRTKPPDRWASLVTAACAKAPYTQKQVTPLAVREQVVDAARLQWPLLFSRLFEVITLSGPRLPKTQLILAVNWKGLCFLDQQEKMLLELSFPEVMGLATNREAQGGQRLLLSTMHEEYEFVSPSSVAIAELVALFLEGLKERSIFAMALQDRKATDDTTLLAFKKGDLLVLTKKQGLLASENWTLGQNDRTGKTGLVPMACLYTIPTVTKPSAQLLSLLAMSPEKRKLAAQEGQFTEPRPEEPPKEKLHTLEEFSYEFFRAPEKDMVSMAVLPLARARGHLWAYSCEPLRQPLLKRVHANVDLWDIACQIFVAILRYMGDYPSRQAWPTLELTDQIFTLALQHPALQDEVYCQILKQLTHNSNRHSEERGWQLLWLCTGLFPPSKGLLPHAQKFIDTRRGKLLAPDCSRRIQKVLRTGPRKQPPHQVEVEAAEQNVSRICHKIYFPNDTSEMLEVVANTRVRDVCDSIATRLQLASWEGCSLFIKISDKVISQKEGDFFFDSLREVSDWVKKNKPQKEGAPVTLPYQVYFMRKLWLNISPGKDVNADTILHYHQELPKYLRGFHKCSREDAIHLAGLIYKAQFNNDRSQLASVPKILRELVPENLTRLMSSEEWKKSILLAYDKHKDKTVEEAKVAFLKWICRWPTFGSAFFEVKQTSEPSYPDVILIAINRHGVLLIHPKTKDLLTTYPFTKISSWSSGSTYFHMALGSLGRGSRLLCETSLGYKMDDLLTSYVQQLLSAMNKQRGSKAPALAST.

The Myosin motor domain occupies 65-760; the sequence is QGVDDMIRLG…QDTLLEVQRS (696 aa). Position 158-165 (158-165) interacts with ATP; the sequence is GESGAGKT. Residues 637 to 659 are actin-binding; the sequence is LDQLMKILTNCQPYFIRCIKPNE. IQ domains lie at 745 to 765, 763 to 792, 786 to 815, 814 to 834, 832 to 861, and 855 to 884; these read IFLR…VLDR, LDRA…AAVT, QRRA…GFER, ERLQ…AMRQ, MRQR…AVVV, and KRRA…NAPL. Ser904 is subject to Phosphoserine. The interval 916–1542 is mediates interaction with ANKS4B; the sequence is EKVFGFLPAM…KKQGLLASEN (627 aa). A MyTH4 1 domain is found at 989–1192; that stretch reads HIRRPLRYPL…PTWLELQAVK (204 aa). One can recognise an FERM 1 domain in the interval 1197–1506; that stretch reads IPIQVILATG…EGLKERSIFA (310 aa). Ser1371 is subject to Phosphoserine. The SH3 domain maps to 1501 to 1567; it reads ERSIFAMALQ…PMACLYTIPT (67 aa). The tract at residues 1501-2116 is mediates interaction with CDHR2, CDHR5 and USH1C; sequence ERSIFAMALQ…GSKAPALAST (616 aa). MyTH4 domains follow at residues 1644–1793 and 1790–1896; these read YSCE…EAAE and EAAE…KLWL. Ser1645 carries the post-translational modification Phosphoserine. Residues 1799–2102 enclose the FERM 2 domain; sequence ICHKIYFPND…SYVQQLLSAM (304 aa).

The protein belongs to the TRAFAC class myosin-kinesin ATPase superfamily. Myosin family. In terms of assembly, part of the IMAC/intermicrovillar adhesion complex/intermicrovillar tip-link complex composed of ANKS4B, MYO7B, USH1C, CDHR2 and CDHR5. Interacts with CDHR2. Interacts with CDHR5. Interacts with USH1C. Interacts with ANKS4B; requires initial interaction with USH1C. Interacts with CALML4; the interaction mediates the association of CALML4 with the IMAC/intermicrovillar adhesion complex.

The protein resides in the cytoplasm. It is found in the cytoskeleton. Its subcellular location is the cell projection. It localises to the microvillus. Myosins are actin-based motor molecules with ATPase activity. Their highly divergent tails are presumed to bind to membranous compartments, which would be moved relative to actin filaments. As part of the intermicrovillar adhesion complex/IMAC plays a role in epithelial brush border differentiation, controlling microvilli organization and length. May link the complex to the actin core bundle of microvilli. The polypeptide is Unconventional myosin-VIIb (Homo sapiens (Human)).